The primary structure comprises 401 residues: 8-amino-7-oxononanoate synthase (401 aa).

Substrate is bound at residue Arg24. A pyridoxal 5'-phosphate-binding site is contributed by 111 to 112 (GF). His137 is a substrate binding site. Pyridoxal 5'-phosphate-binding residues include Ser183, His211, and Thr240. Lys243 carries the N6-(pyridoxal phosphate)lysine modification. Thr357 contributes to the substrate binding site.

Belongs to the class-II pyridoxal-phosphate-dependent aminotransferase family. BioF subfamily. Homodimer. The cofactor is pyridoxal 5'-phosphate.

The enzyme catalyses 6-carboxyhexanoyl-[ACP] + L-alanine + H(+) = (8S)-8-amino-7-oxononanoate + holo-[ACP] + CO2. It participates in cofactor biosynthesis; biotin biosynthesis. Catalyzes the decarboxylative condensation of pimeloyl-[acyl-carrier protein] and L-alanine to produce 8-amino-7-oxononanoate (AON), [acyl-carrier protein], and carbon dioxide. The sequence is that of 8-amino-7-oxononanoate synthase from Xanthomonas oryzae pv. oryzae (strain MAFF 311018).